We begin with the raw amino-acid sequence, 146 residues long: Flagellar assembly factor FliW 1 (146 aa).

Belongs to the FliW family. Interacts with translational regulator CsrA and flagellin(s).

It localises to the cytoplasm. Acts as an anti-CsrA protein, binds CsrA and prevents it from repressing translation of its target genes, one of which is flagellin. Binds to flagellin and participates in the assembly of the flagellum. This is Flagellar assembly factor FliW 1 from Helicobacter hepaticus (strain ATCC 51449 / 3B1).